Consider the following 83-residue polypeptide: MSSGGLLLLLGLLTLWEALTPVSSTDRPEFCELPEDSGPCKGLFHVFYYNSDQNQCLEFIYGGCYGNANNFKTIEECKRTCAA.

An N-terminal signal peptide occupies residues 1 to 24 (MSSGGLLLLLGLLTLWEALTPVSS). The BPTI/Kunitz inhibitor domain occupies 31-81 (CELPEDSGPCKGLFHVFYYNSDQNQCLEFIYGGCYGNANNFKTIEECKRTC). Cystine bridges form between Cys-40-Cys-64 and Cys-56-Cys-77.

The protein belongs to the venom Kunitz-type family. Expressed by the venom gland.

The protein resides in the secreted. Functionally, serine protease inhibitor. The polypeptide is Kunitz-type serine protease inhibitor nigrescinin-1 (Cryptophis nigrescens (Eastern small-eyed snake)).